Reading from the N-terminus, the 764-residue chain is Phosphoribosylformylglycinamidine synthase subunit PurL (764 aa).

Residue histidine 57 is part of the active site. Residues tyrosine 60 and lysine 104 each coordinate ATP. Glutamate 106 provides a ligand contact to Mg(2+). Substrate contacts are provided by residues 107 to 110 and arginine 129; that span reads SHNH. Catalysis depends on histidine 108, which acts as the Proton acceptor. Aspartate 130 is a Mg(2+) binding site. Residue glutamine 258 coordinates substrate. Aspartate 286 is a binding site for Mg(2+). Residue 330–332 participates in substrate binding; it reads ESQ. ATP-binding residues include asparagine 518 and glycine 555. Asparagine 556 is a Mg(2+) binding site. Residue serine 558 coordinates substrate.

Belongs to the FGAMS family. As to quaternary structure, monomer. Part of the FGAM synthase complex composed of 1 PurL, 1 PurQ and 2 PurS subunits.

The protein resides in the cytoplasm. The catalysed reaction is N(2)-formyl-N(1)-(5-phospho-beta-D-ribosyl)glycinamide + L-glutamine + ATP + H2O = 2-formamido-N(1)-(5-O-phospho-beta-D-ribosyl)acetamidine + L-glutamate + ADP + phosphate + H(+). Its pathway is purine metabolism; IMP biosynthesis via de novo pathway; 5-amino-1-(5-phospho-D-ribosyl)imidazole from N(2)-formyl-N(1)-(5-phospho-D-ribosyl)glycinamide: step 1/2. In terms of biological role, part of the phosphoribosylformylglycinamidine synthase complex involved in the purines biosynthetic pathway. Catalyzes the ATP-dependent conversion of formylglycinamide ribonucleotide (FGAR) and glutamine to yield formylglycinamidine ribonucleotide (FGAM) and glutamate. The FGAM synthase complex is composed of three subunits. PurQ produces an ammonia molecule by converting glutamine to glutamate. PurL transfers the ammonia molecule to FGAR to form FGAM in an ATP-dependent manner. PurS interacts with PurQ and PurL and is thought to assist in the transfer of the ammonia molecule from PurQ to PurL. This chain is Phosphoribosylformylglycinamidine synthase subunit PurL, found in Nocardia farcinica (strain IFM 10152).